The following is a 266-amino-acid chain: Heat-inducible transcription repressor HrcA (266 aa).

This sequence belongs to the HrcA family.

Its function is as follows. Negative regulator of class I heat shock genes (grpE-dnaK-dnaJ and groELS operons). Prevents heat-shock induction of these operons. In Helicobacter pylori (strain ATCC 700392 / 26695) (Campylobacter pylori), this protein is Heat-inducible transcription repressor HrcA.